A 295-amino-acid polypeptide reads, in one-letter code: Bifunctional protein FolD (295 aa).

NADP(+) contacts are provided by residues 172–174 (GRS), Ser197, and Ile238.

This sequence belongs to the tetrahydrofolate dehydrogenase/cyclohydrolase family. Homodimer.

It carries out the reaction (6R)-5,10-methylene-5,6,7,8-tetrahydrofolate + NADP(+) = (6R)-5,10-methenyltetrahydrofolate + NADPH. It catalyses the reaction (6R)-5,10-methenyltetrahydrofolate + H2O = (6R)-10-formyltetrahydrofolate + H(+). The protein operates within one-carbon metabolism; tetrahydrofolate interconversion. Its function is as follows. Catalyzes the oxidation of 5,10-methylenetetrahydrofolate to 5,10-methenyltetrahydrofolate and then the hydrolysis of 5,10-methenyltetrahydrofolate to 10-formyltetrahydrofolate. This chain is Bifunctional protein FolD, found in Rickettsia akari (strain Hartford).